The primary structure comprises 131 residues: Small ribosomal subunit protein bS6 (131 aa).

Residues 98-131 (EASPMVKAKDERRERREDFANETADDSEAGDSEE) are disordered. Residues 104 to 116 (KAKDERRERREDF) show a composition bias toward basic and acidic residues. Acidic residues predominate over residues 120 to 131 (TADDSEAGDSEE).

Belongs to the bacterial ribosomal protein bS6 family.

In terms of biological role, binds together with bS18 to 16S ribosomal RNA. The chain is Small ribosomal subunit protein bS6 from Klebsiella pneumoniae (strain 342).